Reading from the N-terminus, the 166-residue chain is Ureidoglycolate lyase (166 aa).

It belongs to the ureidoglycolate lyase family. As to quaternary structure, homodimer. Ni(2+) is required as a cofactor.

The catalysed reaction is (S)-ureidoglycolate = urea + glyoxylate. Its pathway is nitrogen metabolism; (S)-allantoin degradation. Catalyzes the catabolism of the allantoin degradation intermediate (S)-ureidoglycolate, generating urea and glyoxylate. Involved in the utilization of allantoin as nitrogen source. The polypeptide is Ureidoglycolate lyase (Rhizobium etli (strain ATCC 51251 / DSM 11541 / JCM 21823 / NBRC 15573 / CFN 42)).